A 519-amino-acid chain; its full sequence is Cyclin-dependent kinase C-1 (519 aa).

A Protein kinase domain is found at 25 to 325; it reads FEKLEQIGEG…AQDALDAEYF (301 aa). Residues 31-39 and Lys-54 contribute to the ATP site; that span reads IGEGTYGQV. Position 35 is a phosphothreonine (Thr-35). At Tyr-36 the chain carries Phosphotyrosine. Asp-164 acts as the Proton acceptor in catalysis. Thr-198 carries the phosphothreonine modification. Residues 336-348 are compositionally biased toward basic and acidic residues; that stretch reads SLPKYESSHEFQT. The interval 336–519 is disordered; that stretch reads SLPKYESSHE…RNQQQYGNWQ (184 aa). Positions 426 to 444 are enriched in gly residues; that stretch reads GNQGGGYPNRGGQGGGGSY. Over residues 445–454 the composition is skewed to low complexity; sequence GNAPYPQQGR. Composition is skewed to gly residues over residues 464–483 and 490–499; these read GMAG…GGGS and GPYGPSGPGR. Positions 505 to 519 are enriched in polar residues; sequence QQGGSRNQQQYGNWQ.

The protein belongs to the protein kinase superfamily. CMGC Ser/Thr protein kinase family. CDC2/CDKX subfamily.

It catalyses the reaction L-seryl-[protein] + ATP = O-phospho-L-seryl-[protein] + ADP + H(+). It carries out the reaction L-threonyl-[protein] + ATP = O-phospho-L-threonyl-[protein] + ADP + H(+). The catalysed reaction is [DNA-directed RNA polymerase] + ATP = phospho-[DNA-directed RNA polymerase] + ADP + H(+). This is Cyclin-dependent kinase C-1 (CDKC-1) from Oryza sativa subsp. japonica (Rice).